Consider the following 401-residue polypeptide: Probable thioesterase FGSG_00047 (401 aa).

A disordered region spans residues 379-401; that stretch reads AREMDQRKRQKDFTHTTIHDKNS.

This sequence belongs to the AMT4 thioesterase family.

It functions in the pathway mycotoxin biosynthesis. Its function is as follows. Probable thioesterase; part of the gene cluster that mediates the biosynthesis of gramillins A and B, bicyclic lipopeptides that induce cell death in maize leaves but not in wheat leaves. The nonribosomal peptide synthetase GRA1 incorporates respectively a glutamic adic (Glu), a leucine (Leu), a serine (Ser), a hydroxyglutamine (HOGln), a 2-amino decanoic acid, and 2 cysteins (CysB and CysA). The biosynthesis of 2-amino decanoic acid incorporated in gramillins could be initiated by a fatty acid synthase composed of the alpha and beta subunits FGSG_00036 and FGSG_11656. The cytochrome P450 monooxygenase FGSG_15680 could hydroxylate the fatty acid chain. Subsequent oxidation to the ketone by the oxidoreductase FGSG_00048 and transamination by aminotransferase FGSG_00049 could form 2-amino-decanoic acid. On the other hand, FGSG_15680 could also be responsible for the HO-modified glutamine at the gamma-position. Whether hydroxylation occurs on the fully assembled product or on the Gln residue prior to assembly into the gramillins requires further proof. The thioredoxin FGSG_00043 could also be required for the disulfide-bond formation between CysA and CysB. The specific involvement of the remaining proteins from the cluster is more difficult to discern, but could have broader regulatory (FGSG_00040 and FGSG_11657) or enzymatic functions (FGSG_00044 and FGSG_00045). The final C-domain of GRA1 does not possess the expected sequence of a termination CT domain, often implicated in macrocyclization and release of a cyclopeptidein fungal NRPs; and the thioesterase FGSG_00047 may act in concert with the terminal C-domain of GRA1 to catalyze the formation of the macrocyclic anhydride and release of the products. The polypeptide is Probable thioesterase FGSG_00047 (Gibberella zeae (strain ATCC MYA-4620 / CBS 123657 / FGSC 9075 / NRRL 31084 / PH-1) (Wheat head blight fungus)).